Reading from the N-terminus, the 343-residue chain is uncharacterized protein (343 aa).

This is an uncharacterized protein from Saccharolobus islandicus (Sulfolobus islandicus).